Reading from the N-terminus, the 122-residue chain is Basic phospholipase A2 Ts-G6D49 (122 aa).

7 disulfide bridges follow: Cys-26–Cys-115, Cys-28–Cys-44, Cys-43–Cys-95, Cys-49–Cys-122, Cys-50–Cys-88, Cys-57–Cys-81, and Cys-75–Cys-86. Residues Tyr-27, Gly-29, and Gly-31 each contribute to the Ca(2+) site. Residue His-47 is part of the active site. Asp-48 lines the Ca(2+) pocket. Asp-89 is a catalytic residue.

Ca(2+) is required as a cofactor. In terms of tissue distribution, expressed by the venom gland.

The protein localises to the secreted. The enzyme catalyses a 1,2-diacyl-sn-glycero-3-phosphocholine + H2O = a 1-acyl-sn-glycero-3-phosphocholine + a fatty acid + H(+). Its function is as follows. Snake venom phospholipase A2 that induces fast and sustaining local edema a few hours after injection (5-10 ug) in the hind paw, and prolongs the coagulation time of human plasma. Exhibits moderate hydrolytic activities and prefers the zwitterionic micelles (dPPC with Triton X-100) to the anionic micelles (dPPC with deoxycholate). PLA2 catalyzes the calcium-dependent hydrolysis of the 2-acyl groups in 3-sn-phosphoglycerides. This chain is Basic phospholipase A2 Ts-G6D49, found in Trimeresurus stejnegeri (Chinese green tree viper).